Consider the following 705-residue polypeptide: Phosphatidylinositol 4-phosphate 5-kinase 3 (705 aa).

7 MORN repeats span residues 58-80, 81-103, 104-126, 127-149, 150-172, 173-195, and 196-218; these read YNGG…DGCM, YEGE…SGAT, YEGQ…DGDT, YRGH…NGDG, YQGN…DGNE, YVGE…NGNR, and YDGL…EEKT. The PIPK domain maps to 321–701; that stretch reads TVTAGHKNYD…RFRDFINKIF (381 aa). Residues 661–682 are activation loop; sequence YDITKKLEHAYKSLHADPASIS.

It is found in the cell membrane. It catalyses the reaction a 1,2-diacyl-sn-glycero-3-phospho-(1D-myo-inositol 4-phosphate) + ATP = a 1,2-diacyl-sn-glycero-3-phospho-(1D-myo-inositol-4,5-bisphosphate) + ADP + H(+). In terms of biological role, with DRP1A and DRP2B, required for the precise coordination of polar ARAC3/ROP6 and ARAC4/ROP2 placement and subsequent root hair positioning during planar polarity formation in root hair-forming cells, probably by mediating the correct basal-to-planar polarity switching of D6PK into the polar, lipid-enriched domain. The chain is Phosphatidylinositol 4-phosphate 5-kinase 3 from Arabidopsis thaliana (Mouse-ear cress).